A 347-amino-acid polypeptide reads, in one-letter code: NADH-quinone oxidoreductase subunit H (347 aa).

9 consecutive transmembrane segments (helical) span residues 13 to 33 (IIMI…IAYV), 50 to 70 (PNVV…KFVF), 82 to 102 (AVFL…WAVV), 115 to 135 (VGIL…IMGG), 161 to 181 (IGFV…TDIV), 198 to 218 (FLDW…ISAL), 263 to 283 (CSLT…IWIL), 286 to 306 (VPGI…FAMV), and 321 to 341 (LGWK…AFVL).

This sequence belongs to the complex I subunit 1 family. As to quaternary structure, NDH-1 is composed of 14 different subunits. Subunits NuoA, H, J, K, L, M, N constitute the membrane sector of the complex.

It is found in the cell inner membrane. It catalyses the reaction a quinone + NADH + 5 H(+)(in) = a quinol + NAD(+) + 4 H(+)(out). In terms of biological role, NDH-1 shuttles electrons from NADH, via FMN and iron-sulfur (Fe-S) centers, to quinones in the respiratory chain. The immediate electron acceptor for the enzyme in this species is believed to be ubiquinone. Couples the redox reaction to proton translocation (for every two electrons transferred, four hydrogen ions are translocated across the cytoplasmic membrane), and thus conserves the redox energy in a proton gradient. This subunit may bind ubiquinone. In Rhizobium leguminosarum bv. trifolii (strain WSM2304), this protein is NADH-quinone oxidoreductase subunit H.